The sequence spans 642 residues: ATP-dependent zinc metalloprotease FtsH (642 aa).

Over 1–6 (MGRFTK) the chain is Cytoplasmic. Residues 7 to 27 (NIVLYLLIIAAFVIAIDAFSG) traverse the membrane as a helical segment. At 28 to 101 (QSANKSELSY…TAAPPEQPAW (74 aa)) the chain is on the extracellular side. The chain crosses the membrane as a helical span at residues 102 to 122 (WMSLLGSAIPIIILVVLFFFI). The Cytoplasmic segment spans residues 123–642 (MQQTQGGGGR…LSEASSNEIK (520 aa)). 194–201 (GPPGTGKT) contributes to the ATP binding site. H416 contacts Zn(2+). E417 is an active-site residue. Zn(2+) contacts are provided by H420 and D492. Residues 597-610 (TTKEPEAEEPKVAS) are compositionally biased toward basic and acidic residues. The disordered stretch occupies residues 597 to 642 (TTKEPEAEEPKVASEADSSIVPEGVDAKKTTSTVADLSEASSNEIK). Positions 626–642 (TTSTVADLSEASSNEIK) are enriched in polar residues.

This sequence in the central section; belongs to the AAA ATPase family. It in the C-terminal section; belongs to the peptidase M41 family. In terms of assembly, homohexamer. It depends on Zn(2+) as a cofactor.

It localises to the cell membrane. In terms of biological role, acts as a processive, ATP-dependent zinc metallopeptidase for both cytoplasmic and membrane proteins. Plays a role in the quality control of integral membrane proteins. The sequence is that of ATP-dependent zinc metalloprotease FtsH from Veillonella parvula (strain ATCC 10790 / DSM 2008 / CCUG 5123 / JCM 12972 / NCTC 11810 / Te3) (Veillonella alcalescens).